The following is a 256-amino-acid chain: Enolase-phosphatase E1 (256 aa).

Mg(2+) contacts are provided by Asp14 and Glu16. Substrate-binding positions include 142–143 (SS) and Lys176. Asp201 provides a ligand contact to Mg(2+).

This sequence belongs to the HAD-like hydrolase superfamily. MasA/MtnC family. Monomer. Mg(2+) is required as a cofactor.

It is found in the cytoplasm. The protein localises to the nucleus. It carries out the reaction 5-methylsulfanyl-2,3-dioxopentyl phosphate + H2O = 1,2-dihydroxy-5-(methylsulfanyl)pent-1-en-3-one + phosphate. Its pathway is amino-acid biosynthesis; L-methionine biosynthesis via salvage pathway; L-methionine from S-methyl-5-thio-alpha-D-ribose 1-phosphate: step 3/6. It participates in amino-acid biosynthesis; L-methionine biosynthesis via salvage pathway; L-methionine from S-methyl-5-thio-alpha-D-ribose 1-phosphate: step 4/6. Functionally, bifunctional enzyme that catalyzes the enolization of 2,3-diketo-5-methylthiopentyl-1-phosphate (DK-MTP-1-P) into the intermediate 2-hydroxy-3-keto-5-methylthiopentenyl-1-phosphate (HK-MTPenyl-1-P), which is then dephosphorylated to form the acireductone 1,2-dihydroxy-3-keto-5-methylthiopentene (DHK-MTPene). In Drosophila sechellia (Fruit fly), this protein is Enolase-phosphatase E1.